Here is a 58-residue protein sequence, read N- to C-terminus: UPF0391 membrane protein MADE_1011595 (58 aa).

The next 2 helical transmembrane spans lie at 4–24 (WAITFFIIAIIAAVFGFGGIA) and 27–47 (ATGIAQFLFFVFIALLVISLI).

Belongs to the UPF0391 family.

It is found in the cell membrane. This is UPF0391 membrane protein MADE_1011595 from Alteromonas mediterranea (strain DSM 17117 / CIP 110805 / LMG 28347 / Deep ecotype).